The following is a 481-amino-acid chain: MATPLCQPAASHFIDGTFIEDRTGPEILSVNPVDGEIIAKLHGATSCIIEKAIASAKRAQKEWARKEPAERGRVLSRAADIMRARNRELSVLETRDTGKPISETLVADAASGADCLEYFGAIAATLSGDSIQFGEDWVYTRREPLGVCLGIGAWNYPIQIAAWKAAPALACGNAMIFKPSEVTPLSALKLAEILTEAGLPPGVFNIVQGAGDVGAELATHPAIAKVSLTGSVKTGARVASAAMAGIRPVTMELGGKSALIVFDDADVEAAVSGAILGNFYSAGQICSNGTRVFLQRGIREAFLARLLARVAALKIGDPMDEETDIGPLVSAAHRNRVATYVARAEVEGAYQMAPPRKLPPGDAWHEPVVFTNVTDWMTLAREEVFGPVMAVLDFDDEQDVVARANATDFGLAAGIFTRDLVRAHRLAAELEAGTVWINAYNLTPAGMAFGGIKRSGIGRENGRVAIDHYTQLKSVFVSMQT.

K(+) is bound by residues serine 29 and aspartate 96. An NAD(+)-binding site is contributed by 152–154 (GAW). Lysine 164 functions as the Charge relay system in the catalytic mechanism. An NAD(+)-binding site is contributed by 178 to 181 (KPSE). Valine 182 contributes to the K(+) binding site. Residue 231 to 234 (SVKT) participates in NAD(+) binding. Isoleucine 246 serves as a coordination point for K(+). Glutamate 252 serves as the catalytic Proton acceptor. 3 residues coordinate NAD(+): glycine 254, cysteine 286, and glutamate 383. Residue cysteine 286 is the Nucleophile of the active site. Cysteine 286 is modified (cysteine sulfenic acid (-SOH)). Lysine 453 and glycine 456 together coordinate K(+). The Charge relay system role is filled by glutamate 460.

It belongs to the aldehyde dehydrogenase family. As to quaternary structure, dimer of dimers. The cofactor is K(+).

It catalyses the reaction betaine aldehyde + NAD(+) + H2O = glycine betaine + NADH + 2 H(+). It participates in amine and polyamine biosynthesis; betaine biosynthesis via choline pathway; betaine from betaine aldehyde: step 1/1. Involved in the biosynthesis of the osmoprotectant glycine betaine. Catalyzes the irreversible oxidation of betaine aldehyde to the corresponding acid. The protein is Betaine aldehyde dehydrogenase 2 of Rhizobium meliloti (strain 1021) (Ensifer meliloti).